We begin with the raw amino-acid sequence, 102 residues long: Small ribosomal subunit protein uS10 (102 aa).

This sequence belongs to the universal ribosomal protein uS10 family. In terms of assembly, part of the 30S ribosomal subunit.

Its function is as follows. Involved in the binding of tRNA to the ribosomes. The polypeptide is Small ribosomal subunit protein uS10 (Kosmotoga olearia (strain ATCC BAA-1733 / DSM 21960 / TBF 19.5.1)).